The primary structure comprises 167 residues: Caltractin (167 aa).

Residues 1 to 18 (MSSARTVRKDKPRGRHHG) are compositionally biased toward basic residues. The segment at 1 to 23 (MSSARTVRKDKPRGRHHGLTQQK) is disordered. EF-hand domains follow at residues 22–57 (QKRQ…LGFE), 58–93 (MTEE…KIGE), 95–130 (DTKE…LGEN), and 131–166 (FTVK…TSYA). Ca(2+) contacts are provided by D35, D37, S39, T41, E46, D71, D73, S75, E82, D108, D110, N112, K114, D119, D144, D146, D148, E150, and E155.

Belongs to the centrin family.

It is found in the cytoplasm. The protein localises to the cytoskeleton. It localises to the microtubule organizing center. Plays a fundamental role in microtubule-organizing center structure and function. In Atriplex nummularia (Old man saltbush), this protein is Caltractin.